Reading from the N-terminus, the 73-residue chain is Dermaseptin-H4 (73 aa).

A signal peptide spans M1–C22. The propeptide occupies E23 to M43. Residues E25–R45 form a disordered region. Residues E30 to Q40 are compositionally biased toward acidic residues. Leucine amide is present on L70. Positions E72–Q73 are excised as a propeptide.

Expressed by the skin glands.

The protein resides in the secreted. Has antibacterial activity against the Gram-negative bacteria E.coli ATCC 11775 (MIC=0.8 uM), and the Gram-positive bacteria S.aureus ATCC 12600 (MIC=0.4 uM) and M.luteus ATCC 49732 (MIC=0.8 uM). Does not inhibit the growth of the fungus C.albicans. Probably acts by disturbing membrane functions with its amphipathic structure. This chain is Dermaseptin-H4, found in Pithecopus azureus (Orange-legged monkey tree frog).